The sequence spans 123 residues: Small ribosomal subunit protein uS12 (123 aa).

Asp89 carries the 3-methylthioaspartic acid modification.

The protein belongs to the universal ribosomal protein uS12 family. In terms of assembly, part of the 30S ribosomal subunit. Contacts proteins S8 and S17. May interact with IF1 in the 30S initiation complex.

Its function is as follows. With S4 and S5 plays an important role in translational accuracy. Functionally, interacts with and stabilizes bases of the 16S rRNA that are involved in tRNA selection in the A site and with the mRNA backbone. Located at the interface of the 30S and 50S subunits, it traverses the body of the 30S subunit contacting proteins on the other side and probably holding the rRNA structure together. The combined cluster of proteins S8, S12 and S17 appears to hold together the shoulder and platform of the 30S subunit. The chain is Small ribosomal subunit protein uS12 from Afipia carboxidovorans (strain ATCC 49405 / DSM 1227 / KCTC 32145 / OM5) (Oligotropha carboxidovorans).